A 442-amino-acid polypeptide reads, in one-letter code: tRNA modification GTPase MnmE (442 aa).

Residues Arg-27, Glu-84, and Lys-124 each contribute to the (6S)-5-formyl-5,6,7,8-tetrahydrofolate site. One can recognise a TrmE-type G domain in the interval 221–366 (GLHVVIVGAP…LLDALQAFAE (146 aa)). GTP contacts are provided by residues 231-236 (NAGKSS), 250-256 (SEEAGTT), and 275-278 (DTAG). The Mg(2+) site is built by Ser-235 and Thr-256. Residue Lys-442 coordinates (6S)-5-formyl-5,6,7,8-tetrahydrofolate.

Belongs to the TRAFAC class TrmE-Era-EngA-EngB-Septin-like GTPase superfamily. TrmE GTPase family. Homodimer. Heterotetramer of two MnmE and two MnmG subunits. Requires K(+) as cofactor.

It localises to the cytoplasm. Functionally, exhibits a very high intrinsic GTPase hydrolysis rate. Involved in the addition of a carboxymethylaminomethyl (cmnm) group at the wobble position (U34) of certain tRNAs, forming tRNA-cmnm(5)s(2)U34. The chain is tRNA modification GTPase MnmE from Brucella abortus (strain 2308).